Here is a 156-residue protein sequence, read N- to C-terminus: Protein SprT (156 aa).

The SprT-like domain occupies asparagine 15–leucine 153. Histidine 67 contacts Zn(2+). The active site involves glutamate 68. Position 71 (histidine 71) interacts with Zn(2+).

This sequence belongs to the SprT family. Zn(2+) is required as a cofactor.

The protein resides in the cytoplasm. This Glaesserella parasuis serovar 5 (strain SH0165) (Haemophilus parasuis) protein is Protein SprT.